Here is a 293-residue protein sequence, read N- to C-terminus: Membrane protein RL13 (293 aa).

Residues 1–19 form the signal peptide; that stretch reads MHWHLAITWTVIILTFSEC. Residues 245–265 traverse the membrane as a helical segment; sequence IPLGIHAVWAGIVVSVALIAL.

The protein resides in the virion membrane. In terms of biological role, may play a role in modifying tropism or in modulating cell signaling during virus entry. Since RL13 expression severely impairs HCMV replication in epithelial cell cultures, it may act as a regulator promoting persistence by suppressing the switch to fully lytic infection. The chain is Membrane protein RL13 (RL13) from Human cytomegalovirus (strain Merlin) (HHV-5).